A 1160-amino-acid chain; its full sequence is Large proline-rich protein BAG6 (1160 aa).

The 76-residue stretch at 7 to 82 folds into the Ubiquitin-like domain; sequence IEVTVKTLDS…HLVERPPPQS (76 aa). Disordered regions lie at residues 76–114, 206–261, 367–422, 478–547, 563–628, 672–711, 962–1038, and 1126–1160; these read ERPPPQSSQPGGGGGGVSGSSGAADGGSSSSQSSAYTTS, EGQS…HPSP, IPMN…GQGT, ASAG…QTNQ, GDQT…DNLA, SGQPVFPSPNQQPPPSQATPPSAPSGPAPTTAPSGGAETL, SARR…AEPW, and YAQQVKSDIKKRLSDDPDYNHQRFPNTHRVFSEDA. The span at 85-94 shows a compositional bias: gly residues; it reads PGGGGGGVSG. Composition is skewed to low complexity over residues 95-110 and 223-233; these read SSGAADGGSSSSQSSA and SSSSFSAHPMD. Composition is skewed to polar residues over residues 247–257 and 371–417; these read QTEGETQSGPN and LGST…QQTG. Low complexity-rich tracts occupy residues 478–495 and 566–614; these read ASAGHQGQQQGTAGAGAQ and TSTT…STAS. The segment covering 677–698 has biased composition (pro residues); sequence FPSPNQQPPPSQATPPSAPSGP. Low complexity predominate over residues 699–708; that stretch reads APTTAPSGGA. Residues 1132-1146 show a composition bias toward basic and acidic residues; it reads SDIKKRLSDDPDYNH.

As to quaternary structure, component of the bag6/bat3 complex.

It localises to the cytoplasm. The protein resides in the cytosol. The protein localises to the nucleus. It is found in the secreted. Its subcellular location is the extracellular exosome. Its function is as follows. ATP-independent molecular chaperone preventing the aggregation of misfolded and hydrophobic patches-containing proteins. Functions as part of a cytosolic protein quality control complex, the bag6/bat3 complex, which maintains these client proteins in a soluble state and participates in their proper delivery to the endoplasmic reticulum or alternatively can promote their sorting to the proteasome where they undergo degradation. The bag6/bat3 complex is involved in the post-translational delivery of tail-anchored/type II transmembrane proteins to the endoplasmic reticulum membrane. Similarly, the bag6/bat3 complex also functions as a sorting platform for proteins of the secretory pathway that are mislocalized to the cytosol either delivering them to the proteasome for degradation or to the endoplasmic reticulum. The bag6/bat3 complex also plays a role in the endoplasmic reticulum-associated degradation (ERAD), a quality control mechanism that eliminates unwanted proteins of the endoplasmic reticulum through their retrotranslocation to the cytosol and their targeting to the proteasome. It maintains these retrotranslocated proteins in an unfolded yet soluble state condition in the cytosol to ensure their proper delivery to the proteasome. Also required for selective ubiquitin-mediated degradation of defective nascent chain polypeptides by the proteasome. Also involved in endoplasmic reticulum stress-induced pre-emptive quality control, a mechanism that selectively attenuates the translocation of newly synthesized proteins into the endoplasmic reticulum and reroutes them to the cytosol for proteasomal degradation. May ensure the proper degradation of these proteins and thereby protects the endoplasmic reticulum from protein overload upon stress. By stabilizing a large spectrum of proteins, may indirectly affect different biological processes including apoptosis. By controlling the steady-state expression of the IGF1R receptor, indirectly regulates the insulin-like growth factor receptor signaling pathway. Functionally, when nuclear, may also act as a component of some chromatin regulator complex. This is Large proline-rich protein BAG6 from Danio rerio (Zebrafish).